Here is a 205-residue protein sequence, read N- to C-terminus: MIWQDGKLLSPGAVLPGDRVYHGMRIWDPGHSKVAALCHIHGEPPVRNARILYLGAAAGSTVSFLSDYAEVVYAVEFSPRPVRSLIRLARARKNIIPLFEDARYPERYLPFVEPVDLLIQDIAQRDQAEIALRNLIFLKQGGHLILFLKLLSMGTDKKREDRIVEVVNLLEHGGITDPAVLDLDRYHTGHTAVWGIYSLSKNFEK.

Residues 60–61, 76–77, 101–102, and 121–124 contribute to the S-adenosyl-L-methionine site; these read ST, EF, DA, and DIAQ.

The protein belongs to the methyltransferase superfamily. Fibrillarin family. As to quaternary structure, interacts with nop5. Component of box C/D small ribonucleoprotein (sRNP) particles that contain rpl7ae, FlpA and nop5, plus a guide RNA.

Functionally, involved in pre-rRNA and tRNA processing. Utilizes the methyl donor S-adenosyl-L-methionine to catalyze the site-specific 2'-hydroxyl methylation of ribose moieties in rRNA and tRNA. Site specificity is provided by a guide RNA that base pairs with the substrate. Methylation occurs at a characteristic distance from the sequence involved in base pairing with the guide RNA. In Methanospirillum hungatei JF-1 (strain ATCC 27890 / DSM 864 / NBRC 100397 / JF-1), this protein is Fibrillarin-like rRNA/tRNA 2'-O-methyltransferase.